The primary structure comprises 121 residues: Small ribosomal subunit protein uS13 (121 aa).

The tract at residues 97 to 121 (VRGQRTRTNARTRRGARKTVAGKKK) is disordered. Positions 100 to 121 (QRTRTNARTRRGARKTVAGKKK) are enriched in basic residues.

It belongs to the universal ribosomal protein uS13 family. As to quaternary structure, part of the 30S ribosomal subunit. Forms a loose heterodimer with protein S19. Forms two bridges to the 50S subunit in the 70S ribosome.

Located at the top of the head of the 30S subunit, it contacts several helices of the 16S rRNA. In the 70S ribosome it contacts the 23S rRNA (bridge B1a) and protein L5 of the 50S subunit (bridge B1b), connecting the 2 subunits; these bridges are implicated in subunit movement. Contacts the tRNAs in the A and P-sites. The protein is Small ribosomal subunit protein uS13 of Synechococcus sp. (strain CC9902).